The primary structure comprises 914 residues: UPF0182 protein Syncc9605_1323 (914 aa).

Transmembrane regions (helical) follow at residues 4-24 (LLLL…WLWF), 37-57 (WLLQ…ARAW), 81-101 (IALL…LDLL), 123-143 (RIGS…MTWL), 152-172 (IVAA…SLAL), 195-215 (FAGL…TLVF), 240-260 (MRLI…LVWL), 285-305 (LPLR…LLLP), and 312-332 (QFLA…TPLT).

This sequence belongs to the UPF0182 family.

Its subcellular location is the cell membrane. In Synechococcus sp. (strain CC9605), this protein is UPF0182 protein Syncc9605_1323.